The sequence spans 192 residues: UPF0301 protein Bphyt_0868 (192 aa).

Belongs to the UPF0301 (AlgH) family.

The sequence is that of UPF0301 protein Bphyt_0868 from Paraburkholderia phytofirmans (strain DSM 17436 / LMG 22146 / PsJN) (Burkholderia phytofirmans).